The primary structure comprises 58 residues: UPF0339 protein TDE_0826 (58 aa).

The protein belongs to the UPF0339 family.

The chain is UPF0339 protein TDE_0826 from Treponema denticola (strain ATCC 35405 / DSM 14222 / CIP 103919 / JCM 8153 / KCTC 15104).